A 153-amino-acid chain; its full sequence is Nucleoside diphosphate kinase (153 aa).

ATP contacts are provided by Lys-13, Phe-61, Arg-89, Thr-95, Arg-106, and Asn-116. His-119 functions as the Pros-phosphohistidine intermediate in the catalytic mechanism.

Belongs to the NDK family. It depends on Mg(2+) as a cofactor. Highest levels in the liver and kidney with lower levels in the heart, brain and breast muscle.

The protein localises to the cytoplasm. It is found in the cell membrane. It catalyses the reaction a 2'-deoxyribonucleoside 5'-diphosphate + ATP = a 2'-deoxyribonucleoside 5'-triphosphate + ADP. The catalysed reaction is a ribonucleoside 5'-diphosphate + ATP = a ribonucleoside 5'-triphosphate + ADP. In terms of biological role, major role in the synthesis of nucleoside triphosphates other than ATP. The ATP gamma phosphate is transferred to the NDP beta phosphate via a ping-pong mechanism, using a phosphorylated active-site intermediate. The protein is Nucleoside diphosphate kinase of Columba livia (Rock dove).